Reading from the N-terminus, the 681-residue chain is Pumilio domain-containing protein C6G9.14 (681 aa).

Disordered regions lie at residues 180 to 210 (RPGL…PGLI) and 273 to 322 (ASTA…NVPS). Low complexity-rich tracts occupy residues 187 to 210 (TPGP…PGLI) and 273 to 286 (ASTA…SSGS). A PUM-HD domain is found at 319-659 (NVPSLISDDP…RILSKLERRH (341 aa)). Pumilio repeat units follow at residues 342–378 (SLQN…AVFA), 379–414 (ETHP…TFIQ), 415–451 (IIAP…CIVN), 452–487 (ALRP…FIFD), 488–523 (AICE…QLVE), 524–559 (HIVP…AIIS), 560–595 (YFLY…KLIS), and 596–633 (ELMD…ELVE). Over residues 656–666 (ERRHPSSKEKP) the composition is skewed to basic and acidic residues. The disordered stretch occupies residues 656–681 (ERRHPSSKEKPIVYSNSERVNTSSSA). Polar residues predominate over residues 669-681 (YSNSERVNTSSSA).

The sequence is that of Pumilio domain-containing protein C6G9.14 from Schizosaccharomyces pombe (strain 972 / ATCC 24843) (Fission yeast).